The primary structure comprises 944 residues: Protein translocase subunit SecA (944 aa).

Residues Gln90, 108–112 (GEGKT), and Asp509 each bind ATP. The segment at 533 to 565 (VKPEEGHKPPVSPQRKTKSAGFKEEKNKNLSIS) is disordered.

Belongs to the SecA family. Monomer and homodimer. Part of the essential Sec protein translocation apparatus which comprises SecA, SecYEG and auxiliary proteins SecDF. Other proteins may also be involved.

It localises to the cell inner membrane. The protein localises to the cellular thylakoid membrane. Its subcellular location is the cytoplasm. The enzyme catalyses ATP + H2O + cellular proteinSide 1 = ADP + phosphate + cellular proteinSide 2.. Its function is as follows. Part of the Sec protein translocase complex. Interacts with the SecYEG preprotein conducting channel. Has a central role in coupling the hydrolysis of ATP to the transfer of proteins into and across the cell membrane, serving as an ATP-driven molecular motor driving the stepwise translocation of polypeptide chains across the membrane. Functionally, probably participates in protein translocation into and across both the cytoplasmic and thylakoid membranes in cyanobacterial cells. This is Protein translocase subunit SecA from Prochlorococcus marinus (strain NATL1A).